A 252-amino-acid polypeptide reads, in one-letter code: 3-dehydroquinate dehydratase (252 aa).

3-dehydroquinate-binding positions include 46–48 (EWR) and Arg-82. His-143 serves as the catalytic Proton donor/acceptor. The active-site Schiff-base intermediate with substrate is the Lys-170. 3-dehydroquinate contacts are provided by Arg-212, Ser-231, and Gln-235.

It belongs to the type-I 3-dehydroquinase family. In terms of assembly, homodimer.

It catalyses the reaction 3-dehydroquinate = 3-dehydroshikimate + H2O. The protein operates within metabolic intermediate biosynthesis; chorismate biosynthesis; chorismate from D-erythrose 4-phosphate and phosphoenolpyruvate: step 3/7. Its function is as follows. Involved in the third step of the chorismate pathway, which leads to the biosynthesis of aromatic amino acids. Catalyzes the cis-dehydration of 3-dehydroquinate (DHQ) and introduces the first double bond of the aromatic ring to yield 3-dehydroshikimate. The protein is 3-dehydroquinate dehydratase of Listeria innocua serovar 6a (strain ATCC BAA-680 / CLIP 11262).